The primary structure comprises 348 residues: Erlin-1 (348 aa).

Topologically, residues 1 to 7 (MNMTQAR) are cytoplasmic. The chain crosses the membrane as a helical span at residues 8-28 (VLVAAVVGLVAVLLYASIHKI). Residues 29 to 348 (EEGHLAVYYR…NLIQNKESTG (320 aa)) lie on the Lumenal side of the membrane. Asparagine 108 is a glycosylation site (N-linked (GlcNAc...) asparagine). Position 269 is an N6-acetyllysine (lysine 269). Over residues 321-333 (TGRESSHPSKEAL) the composition is skewed to basic and acidic residues. Residues 321–348 (TGRESSHPSKEALEPSGENLIQNKESTG) form a disordered region. The segment covering 339–348 (NLIQNKESTG) has biased composition (polar residues).

The protein belongs to the band 7/mec-2 family. Forms a heteromeric complex with ERLIN2. In complex with ERLIN2, interacts with RNF170. Interacts with AMFR and SYVN1. Post-translationally, deubiquitinated by USP25; leading to stabilization.

The protein localises to the endoplasmic reticulum membrane. Functionally, component of the ERLIN1/ERLIN2 complex which mediates the endoplasmic reticulum-associated degradation (ERAD) of inositol 1,4,5-trisphosphate receptors (IP3Rs). Involved in regulation of cellular cholesterol homeostasis by regulation the SREBP signaling pathway. Binds cholesterol and may promote ER retention of the SCAP-SREBF complex. In Pongo abelii (Sumatran orangutan), this protein is Erlin-1.